The chain runs to 522 residues: Probable cytosolic Fe-S cluster assembly factor narfl (522 aa).

Residues Cys-26, Cys-73, Cys-76, Cys-79, Cys-205, Cys-281, Cys-439, and Cys-443 each contribute to the [4Fe-4S] cluster site.

Belongs to the NARF family.

In terms of biological role, component of the cytosolic iron-sulfur (Fe/S) protein assembly machinery. Required for maturation of extramitochondrial Fe/S proteins. This chain is Probable cytosolic Fe-S cluster assembly factor narfl (narfl), found in Dictyostelium discoideum (Social amoeba).